The following is a 113-amino-acid chain: Large ribosomal subunit protein uL22 (113 aa).

It belongs to the universal ribosomal protein uL22 family. In terms of assembly, part of the 50S ribosomal subunit.

In terms of biological role, this protein binds specifically to 23S rRNA; its binding is stimulated by other ribosomal proteins, e.g. L4, L17, and L20. It is important during the early stages of 50S assembly. It makes multiple contacts with different domains of the 23S rRNA in the assembled 50S subunit and ribosome. The globular domain of the protein is located near the polypeptide exit tunnel on the outside of the subunit, while an extended beta-hairpin is found that lines the wall of the exit tunnel in the center of the 70S ribosome. This is Large ribosomal subunit protein uL22 from Trichlorobacter lovleyi (strain ATCC BAA-1151 / DSM 17278 / SZ) (Geobacter lovleyi).